We begin with the raw amino-acid sequence, 478 residues long: Zinc metalloproteinase/disintegrin (478 aa).

Positions 1-20 (MIQVLLVTICLAAFPYQGSS) are cleaved as a signal peptide. The propeptide occupies 21–188 (IILESGNVND…PIKKVSQLNL (168 aa)). Residues 194-391 (RHVDIVVVVD…QNPQCILNKP (198 aa)) form the Peptidase M12B domain. Cys-207 and Cys-248 form a disulfide bridge. N-linked (GlcNAc...) (complex) asparagine glycosylation occurs at Asn-279. 3 cysteine pairs are disulfide-bonded: Cys-305–Cys-386, Cys-345–Cys-370, and Cys-347–Cys-353. His-330 contributes to the Zn(2+) binding site. Residue Glu-331 is part of the active site. Residues His-334 and His-340 each contribute to the Zn(2+) site. The N-linked (GlcNAc...) (complex) asparagine glycan is linked to Asn-369. A propeptide spanning residues 392–407 (LRTVSIPVSGNEHLEA) is cleaved from the precursor. The Disintegrin domain maps to 397–478 (IPVSGNEHLE…ADCPRYHSHA (82 aa)). 6 disulfide bridges follow: Cys-411-Cys-426, Cys-413-Cys-421, Cys-420-Cys-443, Cys-434-Cys-440, Cys-439-Cys-464, and Cys-452-Cys-471. Positions 456–458 (RGD) match the Cell attachment site motif. Positions 476–478 (SHA) are excised as a propeptide.

This sequence belongs to the venom metalloproteinase (M12B) family. P-II subfamily. P-IIa sub-subfamily. As to quaternary structure, monomeric (disintegrin). Zn(2+) serves as cofactor. In terms of processing, glycans are composed of 4 GlcNAc, 3 Man, 2 Gal, 2 NeuAC and 1 Fuc residue. Expressed by the venom gland.

It is found in the secreted. Impairs hemostasis in the envenomed animal. Its function is as follows. Inhibits platelet aggregation induced by ADP, thrombin, platelet-activating factor and collagen. Acts by inhibiting fibrinogen interaction with platelet receptors alpha-IIb/beta-3 (ITGA2B/ITGB3). This is Zinc metalloproteinase/disintegrin from Calloselasma rhodostoma (Malayan pit viper).